The sequence spans 605 residues: Elongation factor 4 (605 aa).

Residues 9–192 (GMIRNFCIIA…AIVQRIPAPA (184 aa)) form the tr-type G domain. Residues 21–26 (DHGKST) and 139–142 (NKID) each bind GTP.

This sequence belongs to the TRAFAC class translation factor GTPase superfamily. Classic translation factor GTPase family. LepA subfamily.

The protein localises to the cell inner membrane. The enzyme catalyses GTP + H2O = GDP + phosphate + H(+). Its function is as follows. Required for accurate and efficient protein synthesis under certain stress conditions. May act as a fidelity factor of the translation reaction, by catalyzing a one-codon backward translocation of tRNAs on improperly translocated ribosomes. Back-translocation proceeds from a post-translocation (POST) complex to a pre-translocation (PRE) complex, thus giving elongation factor G a second chance to translocate the tRNAs correctly. Binds to ribosomes in a GTP-dependent manner. This Chlorobaculum parvum (strain DSM 263 / NCIMB 8327) (Chlorobium vibrioforme subsp. thiosulfatophilum) protein is Elongation factor 4.